Consider the following 568-residue polypeptide: 2-succinyl-5-enolpyruvyl-6-hydroxy-3-cyclohexene-1-carboxylate synthase (568 aa).

This sequence belongs to the TPP enzyme family. MenD subfamily. Homodimer. Mg(2+) serves as cofactor. The cofactor is Mn(2+). Requires thiamine diphosphate as cofactor.

The enzyme catalyses isochorismate + 2-oxoglutarate + H(+) = 5-enolpyruvoyl-6-hydroxy-2-succinyl-cyclohex-3-ene-1-carboxylate + CO2. The protein operates within quinol/quinone metabolism; 1,4-dihydroxy-2-naphthoate biosynthesis; 1,4-dihydroxy-2-naphthoate from chorismate: step 2/7. Its pathway is quinol/quinone metabolism; menaquinone biosynthesis. Catalyzes the thiamine diphosphate-dependent decarboxylation of 2-oxoglutarate and the subsequent addition of the resulting succinic semialdehyde-thiamine pyrophosphate anion to isochorismate to yield 2-succinyl-5-enolpyruvyl-6-hydroxy-3-cyclohexene-1-carboxylate (SEPHCHC). The polypeptide is 2-succinyl-5-enolpyruvyl-6-hydroxy-3-cyclohexene-1-carboxylate synthase (Haemophilus influenzae (strain PittGG)).